The chain runs to 398 residues: Lymphocyte transmembrane adapter 1 (398 aa).

Residues 1 to 37 (MDGVTPTLSTIRGRTLESSTLHVTPRSLDRNKDQITN) are Extracellular-facing. The helical; Signal-anchor for type III membrane protein transmembrane segment at 38 to 58 (IFSGFAGLLAILLVVAVFCIL) threads the bilayer. Residues 59-398 (WNWNKRKKRQ…GPGTQLLPDE (340 aa)) are Cytoplasmic-facing. At Y193 the chain carries Phosphotyrosine. Positions 228 to 261 (TEERDEGCGDAGDCTSLYSPGAEDSDSLSNGEGS) are disordered. Residues Y268 and Y294 each carry the phosphotyrosine modification. The disordered stretch occupies residues 298 to 330 (PAADPSGSQQQAEKDVPSSNIGHVEDKTDDPGT). Over residues 303 to 318 (SGSQQQAEKDVPSSNI) the composition is skewed to polar residues. Basic and acidic residues predominate over residues 320-329 (HVEDKTDDPG). Residues Y345 and Y373 each carry the phosphotyrosine modification. The segment at 347 to 398 (DFQPFTQSEDSQMKHREEMSNEDSSDYENVLTAKLGGRDSEQGPGTQLLPDE) is disordered.

When phosphorylated, interacts with GRB2, PIK3R1 and GRAP2. Post-translationally, phosphorylated on tyrosines by Syk, Lck or ZAP70 upon TCR or BCR activation; which leads to the recruitment of GRB2, PIK3R1 and GRAP2. As to expression, expressed in spleen, thymus, and peripheral blood leukocytes. Expressed in several B-, T-, NK and monocyte cell lines.

The protein resides in the cell membrane. Negatively regulates TCR (T-cell antigen receptor)-mediated signaling in T-cells and BCR (B-cell antigen receptor)-mediated signaling in B-cells. This chain is Lymphocyte transmembrane adapter 1 (LAX1), found in Homo sapiens (Human).